The primary structure comprises 695 residues: Polyribonucleotide nucleotidyltransferase (695 aa).

Residues Asp488 and Asp494 each contribute to the Mg(2+) site. In terms of domain architecture, KH spans 554 to 613 (PKTTIIKIKTDKIRDLIGRGGETIKGIISTSCASIDVDDSGNVNIFSNNQKSFDTAVQMV). The 68-residue stretch at 623–690 (NKVYTGKVVK…DRGRIKLSRK (68 aa)) folds into the S1 motif domain.

Belongs to the polyribonucleotide nucleotidyltransferase family. As to quaternary structure, component of the RNA degradosome, which is a multiprotein complex involved in RNA processing and mRNA degradation. Mg(2+) is required as a cofactor.

The protein resides in the cytoplasm. The catalysed reaction is RNA(n+1) + phosphate = RNA(n) + a ribonucleoside 5'-diphosphate. Functionally, involved in mRNA degradation. Catalyzes the phosphorolysis of single-stranded polyribonucleotides processively in the 3'- to 5'-direction. The protein is Polyribonucleotide nucleotidyltransferase of Vesicomyosocius okutanii subsp. Calyptogena okutanii (strain HA).